The following is a 417-amino-acid chain: Serine hydroxymethyltransferase (417 aa).

Residues leucine 121 and 125–127 each bind (6S)-5,6,7,8-tetrahydrofolate; that span reads GHL. Lysine 229 carries the post-translational modification N6-(pyridoxal phosphate)lysine. 355 to 357 lines the (6S)-5,6,7,8-tetrahydrofolate pocket; the sequence is SPF.

It belongs to the SHMT family. In terms of assembly, homodimer. It depends on pyridoxal 5'-phosphate as a cofactor.

It localises to the cytoplasm. The enzyme catalyses (6R)-5,10-methylene-5,6,7,8-tetrahydrofolate + glycine + H2O = (6S)-5,6,7,8-tetrahydrofolate + L-serine. Its pathway is one-carbon metabolism; tetrahydrofolate interconversion. It functions in the pathway amino-acid biosynthesis; glycine biosynthesis; glycine from L-serine: step 1/1. In terms of biological role, catalyzes the reversible interconversion of serine and glycine with tetrahydrofolate (THF) serving as the one-carbon carrier. This reaction serves as the major source of one-carbon groups required for the biosynthesis of purines, thymidylate, methionine, and other important biomolecules. Also exhibits THF-independent aldolase activity toward beta-hydroxyamino acids, producing glycine and aldehydes, via a retro-aldol mechanism. The sequence is that of Serine hydroxymethyltransferase from Shewanella baltica (strain OS185).